The sequence spans 59 residues: Large ribosomal subunit protein bL32C (59 aa).

The protein belongs to the bacterial ribosomal protein bL32 family.

The chain is Large ribosomal subunit protein bL32C (rpmF3) from Enterococcus faecalis (strain ATCC 700802 / V583).